A 239-amino-acid polypeptide reads, in one-letter code: Ribonuclease PH (239 aa).

Phosphate contacts are provided by residues arginine 87 and glycine 125–arginine 127.

Belongs to the RNase PH family. As to quaternary structure, homohexameric ring arranged as a trimer of dimers.

It carries out the reaction tRNA(n+1) + phosphate = tRNA(n) + a ribonucleoside 5'-diphosphate. In terms of biological role, phosphorolytic 3'-5' exoribonuclease that plays an important role in tRNA 3'-end maturation. Removes nucleotide residues following the 3'-CCA terminus of tRNAs; can also add nucleotides to the ends of RNA molecules by using nucleoside diphosphates as substrates, but this may not be physiologically important. Probably plays a role in initiation of 16S rRNA degradation (leading to ribosome degradation) during starvation. The protein is Ribonuclease PH of Azotobacter vinelandii (strain DJ / ATCC BAA-1303).